Consider the following 1417-residue polypeptide: DNA-directed RNA polymerase subunit beta' (1417 aa).

Zn(2+)-binding residues include cysteine 68, cysteine 70, cysteine 83, and cysteine 86. Mg(2+) contacts are provided by aspartate 458, aspartate 460, and aspartate 462. Zn(2+) is bound by residues cysteine 811, cysteine 884, cysteine 891, and cysteine 894.

It belongs to the RNA polymerase beta' chain family. The RNAP catalytic core consists of 2 alpha, 1 beta, 1 beta' and 1 omega subunit. When a sigma factor is associated with the core the holoenzyme is formed, which can initiate transcription. It depends on Mg(2+) as a cofactor. Zn(2+) serves as cofactor.

The catalysed reaction is RNA(n) + a ribonucleoside 5'-triphosphate = RNA(n+1) + diphosphate. Functionally, DNA-dependent RNA polymerase catalyzes the transcription of DNA into RNA using the four ribonucleoside triphosphates as substrates. In Francisella tularensis subsp. tularensis (strain FSC 198), this protein is DNA-directed RNA polymerase subunit beta'.